Consider the following 340-residue polypeptide: uncharacterized protein (340 aa).

The tract at residues 284-340 (DHSTPTNYQQETPASQQQLDQENEPIKPSKKSNSSSLPRGTTQPKSNSINRVSKLID) is disordered. Composition is skewed to polar residues over residues 286-303 (STPTNYQQETPASQQQLD) and 320-334 (LPRGTTQPKSNSINR).

This is an uncharacterized protein from Mycoplasma genitalium (strain ATCC 33530 / DSM 19775 / NCTC 10195 / G37) (Mycoplasmoides genitalium).